The primary structure comprises 224 residues: Flagellar L-ring protein (224 aa).

The signal sequence occupies residues 1–15; it reads MARYFILAVALLLTA. Residue Cys16 is the site of N-palmitoyl cysteine attachment. A lipid anchor (S-diacylglycerol cysteine) is attached at Cys16.

The protein belongs to the FlgH family. As to quaternary structure, the basal body constitutes a major portion of the flagellar organelle and consists of four rings (L,P,S, and M) mounted on a central rod.

The protein localises to the cell outer membrane. It localises to the bacterial flagellum basal body. Assembles around the rod to form the L-ring and probably protects the motor/basal body from shearing forces during rotation. The sequence is that of Flagellar L-ring protein from Shewanella sp. (strain MR-7).